A 222-amino-acid chain; its full sequence is Leucyl/phenylalanyl-tRNA--protein transferase (222 aa).

Belongs to the L/F-transferase family.

It is found in the cytoplasm. The enzyme catalyses N-terminal L-lysyl-[protein] + L-leucyl-tRNA(Leu) = N-terminal L-leucyl-L-lysyl-[protein] + tRNA(Leu) + H(+). It carries out the reaction N-terminal L-arginyl-[protein] + L-leucyl-tRNA(Leu) = N-terminal L-leucyl-L-arginyl-[protein] + tRNA(Leu) + H(+). It catalyses the reaction L-phenylalanyl-tRNA(Phe) + an N-terminal L-alpha-aminoacyl-[protein] = an N-terminal L-phenylalanyl-L-alpha-aminoacyl-[protein] + tRNA(Phe). In terms of biological role, functions in the N-end rule pathway of protein degradation where it conjugates Leu, Phe and, less efficiently, Met from aminoacyl-tRNAs to the N-termini of proteins containing an N-terminal arginine or lysine. This Legionella pneumophila (strain Lens) protein is Leucyl/phenylalanyl-tRNA--protein transferase.